A 524-amino-acid polypeptide reads, in one-letter code: Casein kinase I homolog 3 (524 aa).

In terms of domain architecture, Protein kinase spans 14 to 319; sequence YAVGPKIGEG…YLISLMDDAL (306 aa). ATP is bound by residues 20 to 28 and Lys60; that span reads IGEGSFGVI. Asp150 (proton acceptor) is an active-site residue. 2 disordered regions span residues 352–414 and 427–474; these read HGYG…KQQH and PETH…EHNL. Positions 360 to 373 are enriched in low complexity; the sequence is RVNGNTARNNVNTN. Polar residues-rich tracts occupy residues 374 to 413 and 429 to 474; these read SKTR…TKQQ and THSN…EHNL. Residues 444–447 carry the YXXZ targeting signal motif; that stretch reads YDSI. S-palmitoyl cysteine attachment occurs at residues Cys517, Cys518, Cys519, Cys520, Cys522, Cys523, and Cys524.

It belongs to the protein kinase superfamily. CK1 Ser/Thr protein kinase family. Casein kinase I subfamily.

The protein resides in the cell membrane. The protein localises to the nucleus membrane. Its subcellular location is the vacuole membrane. It catalyses the reaction L-seryl-[protein] + ATP = O-phospho-L-seryl-[protein] + ADP + H(+). The enzyme catalyses L-threonyl-[protein] + ATP = O-phospho-L-threonyl-[protein] + ADP + H(+). In terms of biological role, casein kinases are operationally defined by their preferential utilization of acidic proteins such as caseins as substrates. Phosphorylates MON1, inhibiting the guanine nucleotide exchange factor activity of the MON1-CCZ1 complex, possibly by preventing its recruitment to membranes by small GTPase RAB5 homologs. The sequence is that of Casein kinase I homolog 3 (YCK3) from Saccharomyces cerevisiae (strain ATCC 204508 / S288c) (Baker's yeast).